Consider the following 556-residue polypeptide: Formate--tetrahydrofolate ligase (556 aa).

65–72 (TPAGEGKS) is a binding site for ATP.

This sequence belongs to the formate--tetrahydrofolate ligase family.

It catalyses the reaction (6S)-5,6,7,8-tetrahydrofolate + formate + ATP = (6R)-10-formyltetrahydrofolate + ADP + phosphate. It functions in the pathway one-carbon metabolism; tetrahydrofolate interconversion. The sequence is that of Formate--tetrahydrofolate ligase from Clostridium novyi (strain NT).